The chain runs to 686 residues: MATDPRKILVTCALPYANGSIHLGHMLEHIQADIWVRYQRLRGNDVNFICADDAHGTPIMLKAQQMGISPEEMIAAVSEEHQKDFAGFDISFDNYHSTHSDENRELASHIYLELKKNGFITSRTISQLFDPEKEMFLPDRFVKGTCPKCKAEDQYGDNCDNCGETYSPTDLINPKSAVSGATPVMKDSEHFFFDLPQFESMLKEWTRSGSLQSETANKMQEWFESGLQQWDISRDAPYFGFEIPGETNKFFYVWLDAPIGYMGSFKNLCNKRDDLNFDEYWKKDSTTELYHFIGKDIVYFHSLFWPAMLDGAGFRKPNNVFVHGYVTVNGAKMSKSKGTFIKAGTYLNHLDPECLRYYYAAKLNSRIDDLDLNLEDFTQRVNSDVVNKIVNLASRNAGFITKRFDGKLADNFVEPELYNEFIAAADRIAELYETREFGRAIREITALADKANQYIDEKAPWVLAKEEGKEQELQEVSSVGINLFRVLMAYLKPVMPELAARTEAFLNETLTWEGVAQPLVAHEITKFKALFARIDPKKVEAMIEESKEDAAIEMAAKEKAEAEKEKASQTELDKDPIADEIEFDAFEAVDMRIARIISCEEVPKANKLLKFQLDIGGETRQVFSGIKSAYKPEELEGKLTVMVANLKPRKMKFGMSEGMILAAGPGGKELWILEPHEGAQPGMRVM.

Positions 15-25 match the 'HIGH' region motif; it reads PYANGSIHLGH. Zn(2+)-binding residues include Cys-146, Cys-149, Cys-159, and Cys-162. The 'KMSKS' region signature appears at 332-336; sequence KMSKS. An ATP-binding site is contributed by Lys-335. Residues 585 to 686 enclose the tRNA-binding domain; sequence AFEAVDMRIA…EGAQPGMRVM (102 aa).

Belongs to the class-I aminoacyl-tRNA synthetase family. MetG type 1 subfamily. Homodimer. The cofactor is Zn(2+).

Its subcellular location is the cytoplasm. The enzyme catalyses tRNA(Met) + L-methionine + ATP = L-methionyl-tRNA(Met) + AMP + diphosphate. Is required not only for elongation of protein synthesis but also for the initiation of all mRNA translation through initiator tRNA(fMet) aminoacylation. This is Methionine--tRNA ligase from Aliivibrio fischeri (strain ATCC 700601 / ES114) (Vibrio fischeri).